A 382-amino-acid chain; its full sequence is Protein farnesyltransferase subunit beta (382 aa).

PFTB repeat units follow at residues 78-119 (CERA…CLCD), 129-170 (RDRL…SLVG), 178-219 (FEGT…ALLG), 226-268 (EIKL…VIVA), and 286-328 (PEKL…SSIA). Residues 204–207 (HGGY) and 247–250 (RSNK) each bind (2E,6E)-farnesyl diphosphate. Zn(2+)-binding residues include Asp253 and Cys255. 256–259 (YSWW) is a binding site for (2E,6E)-farnesyl diphosphate. His316 contributes to the Zn(2+) binding site.

It belongs to the protein prenyltransferase subunit beta family. Heterodimer of an alpha(cwp1) and a beta(cpp1) subunit. Zn(2+) is required as a cofactor.

It carries out the reaction L-cysteinyl-[protein] + (2E,6E)-farnesyl diphosphate = S-(2E,6E)-farnesyl-L-cysteinyl-[protein] + diphosphate. Its function is as follows. Catalyzes the transfer of a farnesyl moiety from farnesyl diphosphate to a cysteine at the fourth position from the C-terminus of several proteins. The beta(cpp1) subunit is responsible for peptide-binding. This Schizosaccharomyces pombe (strain 972 / ATCC 24843) (Fission yeast) protein is Protein farnesyltransferase subunit beta (cpp1).